A 386-amino-acid polypeptide reads, in one-letter code: MTLDDSSLQKFGFIKRETLGSINIDPLQTGGLLTGAAKQALVEWGDGYSVCDFCGGVLDLVKKPPIHDFVHKALPEFLGCDEARVTNGARESKFAVMHSMGKPGDWVVLDGLAHYSSYVAAERAGLNIEVVPHAGSPEYHLDPGRYGKAIEEVTKENGKPPVLALVTYPDGSYGNIPDAAKIASVCHEYDVPLLLNGAYSVGRMPVSAKEIGADFIVGSGHKSMAASGPVGVLGVSEEYAPVVFRKSVHNKVKEIELLGCTARGATVMTLMASFPEVVKRTRNWDQEVENARWFSSRLEGMGFIQRGQKPHSHDLMFFEAPGFYEISQKVKNGRYFLYRELKERNIHGIKSGLTKYFKLSTFGLGKEKLGTVADAFEDILKKYENI.

Pyridoxal 5'-phosphate contacts are provided by residues 89-90 (AR), N196, and 219-221 (SGH). K222 is subject to N6-(pyridoxal phosphate)lysine.

It belongs to the SepCysS family. In terms of assembly, homodimer. Interacts with SepRS. Pyridoxal 5'-phosphate serves as cofactor.

The enzyme catalyses O-phospho-L-seryl-tRNA(Cys) + hydrogen sulfide + H(+) = L-cysteinyl-tRNA(Cys) + phosphate. Functionally, converts O-phospho-L-seryl-tRNA(Cys) (Sep-tRNA(Cys)) to L-cysteinyl-tRNA(Cys) (Cys-tRNA(Cys)). The sequence is that of O-phospho-L-seryl-tRNA:Cys-tRNA synthase from Methanosarcina mazei (strain ATCC BAA-159 / DSM 3647 / Goe1 / Go1 / JCM 11833 / OCM 88) (Methanosarcina frisia).